The sequence spans 136 residues: NADH-quinone oxidoreductase subunit A (136 aa).

The next 3 helical transmembrane spans lie at 20-40, 70-90, and 99-119; these read LAVY…VAWW, VPFY…AYIL, and LGWA…VGLV.

The protein belongs to the complex I subunit 3 family. In terms of assembly, NDH-1 is composed of 14 different subunits. Subunits NuoA, H, J, K, L, M, N constitute the membrane sector of the complex.

The protein localises to the cell inner membrane. It catalyses the reaction a quinone + NADH + 5 H(+)(in) = a quinol + NAD(+) + 4 H(+)(out). NDH-1 shuttles electrons from NADH, via FMN and iron-sulfur (Fe-S) centers, to quinones in the respiratory chain. The immediate electron acceptor for the enzyme in this species is believed to be ubiquinone. Couples the redox reaction to proton translocation (for every two electrons transferred, four hydrogen ions are translocated across the cytoplasmic membrane), and thus conserves the redox energy in a proton gradient. This chain is NADH-quinone oxidoreductase subunit A, found in Syntrophobacter fumaroxidans (strain DSM 10017 / MPOB).